The sequence spans 126 residues: Protein Wnt-7(II) (126 aa).

Ser-1 is lipidated: O-palmitoleoyl serine; by PORCN. Cys-92 and Cys-107 are oxidised to a cystine. Residue Asn-93 is glycosylated (N-linked (GlcNAc...) asparagine).

The protein belongs to the Wnt family. In terms of processing, palmitoleoylation is required for efficient binding to frizzled receptors. Depalmitoleoylation leads to Wnt signaling pathway inhibition.

Its subcellular location is the secreted. It is found in the extracellular space. The protein localises to the extracellular matrix. In terms of biological role, ligand for members of the frizzled family of seven transmembrane receptors. Probable developmental protein. May be a signaling molecule which affects the development of discrete regions of tissues. Is likely to signal over only few cell diameters. The polypeptide is Protein Wnt-7(II) (WNT-7(II)) (Eptatretus stoutii (Pacific hagfish)).